The primary structure comprises 452 residues: Cell division protein FtsZ (452 aa).

Residues Gly24–Asn28, Gly111–Gly113, Glu142, Arg146, and Asp190 each bind GTP. Residues Asp432–Asp452 are disordered. The segment covering Gln433–Asp442 has biased composition (basic and acidic residues).

It belongs to the FtsZ family. As to quaternary structure, homodimer. Polymerizes to form a dynamic ring structure in a strictly GTP-dependent manner. Interacts directly with several other division proteins.

The protein resides in the cytoplasm. Functionally, essential cell division protein that forms a contractile ring structure (Z ring) at the future cell division site. The regulation of the ring assembly controls the timing and the location of cell division. One of the functions of the FtsZ ring is to recruit other cell division proteins to the septum to produce a new cell wall between the dividing cells. Binds GTP and shows GTPase activity. The protein is Cell division protein FtsZ of Rickettsia conorii (strain ATCC VR-613 / Malish 7).